We begin with the raw amino-acid sequence, 217 residues long: MOB kinase activator 3A (217 aa).

Zn(2+) is bound by residues Cys-83, Cys-88, His-165, and His-170.

The protein belongs to the MOB1/phocein family.

In terms of biological role, may regulate the activity of kinases. The protein is MOB kinase activator 3A (MOB3A) of Homo sapiens (Human).